The chain runs to 275 residues: Large ribosomal subunit protein uL2 (275 aa).

2 disordered regions span residues 34–59 (LEKK…GGHK) and 223–275 (VAMN…RNKK).

The protein belongs to the universal ribosomal protein uL2 family. In terms of assembly, part of the 50S ribosomal subunit. Forms a bridge to the 30S subunit in the 70S ribosome.

Functionally, one of the primary rRNA binding proteins. Required for association of the 30S and 50S subunits to form the 70S ribosome, for tRNA binding and peptide bond formation. It has been suggested to have peptidyltransferase activity; this is somewhat controversial. Makes several contacts with the 16S rRNA in the 70S ribosome. The chain is Large ribosomal subunit protein uL2 from Teredinibacter turnerae (strain ATCC 39867 / T7901).